The sequence spans 390 residues: Endonuclease 8-like 1 (390 aa).

The active-site Schiff-base intermediate with DNA is P2. E3 acts as the Proton donor in catalysis. The active-site Proton donor; for beta-elimination activity is K54. N176 serves as a coordination point for DNA. Residues 278–390 (TIWFQGDPGP…SLEPEGTSAS (113 aa)) are disordered. The span at 291–301 (KGRKSRKKKSK) shows a compositional bias: basic residues. The segment covering 335-347 (TATQRPEGTSLQQ) has biased composition (polar residues). R339 serves as a coordination point for DNA. R339 (proton donor; for delta-elimination activity) is an active-site residue.

The protein belongs to the FPG family. Ubiquitous.

The protein resides in the cytoplasm. It localises to the cytoskeleton. The protein localises to the microtubule organizing center. Its subcellular location is the centrosome. It is found in the nucleus. The protein resides in the chromosome. The enzyme catalyses 2'-deoxyribonucleotide-(2'-deoxyribose 5'-phosphate)-2'-deoxyribonucleotide-DNA = a 3'-end 2'-deoxyribonucleotide-(2,3-dehydro-2,3-deoxyribose 5'-phosphate)-DNA + a 5'-end 5'-phospho-2'-deoxyribonucleoside-DNA + H(+). Functionally, involved in base excision repair of DNA damaged by oxidation or by mutagenic agents. Acts as a DNA glycosylase that recognizes and removes damaged bases. Has a preference for oxidized pyrimidines, such as thymine glycol, formamidopyrimidine (Fapy) and 5-hydroxyuracil. Has marginal activity towards 8-oxoguanine. Has AP (apurinic/apyrimidinic) lyase activity and introduces nicks in the DNA strand. Cleaves the DNA backbone by beta-delta elimination to generate a single-strand break at the site of the removed base with both 3'- and 5'-phosphates. Has DNA glycosylase/lyase activity towards mismatched uracil and thymine, in particular in U:C and T:C mismatches. Specifically binds 5-hydroxymethylcytosine (5hmC), suggesting that it acts as a specific reader of 5hmC. The sequence is that of Endonuclease 8-like 1 (NEIL1) from Homo sapiens (Human).